Here is a 120-residue protein sequence, read N- to C-terminus: MYNFNKPIGSYGEHISENFLVSKGHKILTKNFRCRSGEIDIISSHNNYICFTEVKTRYNYSFGIPCESVTITKIKKIRNTAKFYIYINKLFKNNFKFNVIEIILNKYSNDYSINFIENAF.

Belongs to the UPF0102 family.

The sequence is that of UPF0102 protein NT01CX_2205 from Clostridium novyi (strain NT).